Here is a 60-residue protein sequence, read N- to C-terminus: Potassium channel toxin alpha-KTx 12.7 (60 aa).

The N-terminal stretch at 1–22 (MSNMPVLIITLLLFSMYISTAA) is a signal peptide. Intrachain disulfides connect cysteine 30–cysteine 51, cysteine 36–cysteine 56, and cysteine 40–cysteine 58.

The protein belongs to the short scorpion toxin superfamily. Potassium channel inhibitor family. Alpha-KTx 12 subfamily. Expressed by the venom gland.

The protein resides in the secreted. Its function is as follows. Inhibits voltage-gated potassium channels. The protein is Potassium channel toxin alpha-KTx 12.7 of Lychas mucronatus (Chinese swimming scorpion).